The primary structure comprises 358 residues: MTYNLKKYIRTDLEDFDGYSACKAPELVKTSKQIIKLDANENLYGAAPTVRQAMSEFNQYHIYPDATQSEIRRLLSEYTGVAVEQIVCGAGSDQLIDLLLRLFINPGDEVINCPPTFAMYKFYTELNRGKIVNVPRDASYNINIAAINNAITPQTKLIFIAAPNNPTGTAISKEEIRQILDLGVPTVVDEAYYEFTGQTMVSDMSKYPNLMILRTFSKWAGLAGLRVGYGLFPPIIADYLSRIKDPYSVNIAADAAVRQTMLQREYMLETVKKIVNERQRLYTELSKFGWLKPYPSVANFILCKLLKGKAKEVQHELESKGILVRCFDAPMMENCLRFSVGKPEDTDGLLKALGEMGE.

K218 is subject to N6-(pyridoxal phosphate)lysine.

Belongs to the class-II pyridoxal-phosphate-dependent aminotransferase family. Histidinol-phosphate aminotransferase subfamily. As to quaternary structure, homodimer. Requires pyridoxal 5'-phosphate as cofactor.

The enzyme catalyses L-histidinol phosphate + 2-oxoglutarate = 3-(imidazol-4-yl)-2-oxopropyl phosphate + L-glutamate. It functions in the pathway amino-acid biosynthesis; L-histidine biosynthesis; L-histidine from 5-phospho-alpha-D-ribose 1-diphosphate: step 7/9. The sequence is that of Histidinol-phosphate aminotransferase from Dehalococcoides mccartyi (strain ATCC BAA-2100 / JCM 16839 / KCTC 5957 / BAV1).